Reading from the N-terminus, the 596-residue chain is Elongation factor 4 (596 aa).

The tr-type G domain maps to 2 to 184; the sequence is KHIRNFSIIA…TIVAQIPPPE (183 aa). GTP contacts are provided by residues 14–19 and 131–134; these read DHGKST and NKID.

The protein belongs to the TRAFAC class translation factor GTPase superfamily. Classic translation factor GTPase family. LepA subfamily.

Its subcellular location is the cell inner membrane. The catalysed reaction is GTP + H2O = GDP + phosphate + H(+). In terms of biological role, required for accurate and efficient protein synthesis under certain stress conditions. May act as a fidelity factor of the translation reaction, by catalyzing a one-codon backward translocation of tRNAs on improperly translocated ribosomes. Back-translocation proceeds from a post-translocation (POST) complex to a pre-translocation (PRE) complex, thus giving elongation factor G a second chance to translocate the tRNAs correctly. Binds to ribosomes in a GTP-dependent manner. This chain is Elongation factor 4, found in Shewanella loihica (strain ATCC BAA-1088 / PV-4).